Consider the following 322-residue polypeptide: Ferredoxin--NADP reductase (322 aa).

7 residues coordinate FAD: aspartate 34, glutamine 42, tyrosine 47, valine 87, phenylalanine 120, aspartate 279, and threonine 320.

It belongs to the ferredoxin--NADP reductase type 2 family. Homodimer. It depends on FAD as a cofactor.

It catalyses the reaction 2 reduced [2Fe-2S]-[ferredoxin] + NADP(+) + H(+) = 2 oxidized [2Fe-2S]-[ferredoxin] + NADPH. This Streptococcus pneumoniae (strain Hungary19A-6) protein is Ferredoxin--NADP reductase.